Consider the following 99-residue polypeptide: Virion membrane protein OPG135 (99 aa).

An N-terminal signal peptide occupies residues 1–22; it reads MSCYTAILKSVGGLALFQVANG. Over 23 to 45 the chain is Intravirion; the sequence is AIDLCRHFFMYFCEQKLRPNSFW. Residues 46–66 traverse the membrane as a helical segment; that stretch reads FVVVRAIASMIMYLVLGIALL. Topologically, residues 67–83 are virion surface; the sequence is YISEQDDKKNTNNDGSN. Positions 73 to 89 are enriched in basic and acidic residues; sequence DKKNTNNDGSNNDKRNE. The interval 73–99 is disordered; it reads DKKNTNNDGSNNDKRNESSINSNSSPK. An N-linked (GlcNAc...) asparagine; by host glycan is attached at N88. The span at 90 to 99 shows a compositional bias: polar residues; it reads SSINSNSSPK.

This sequence belongs to the oerthopoxvirus OPG135 family.

The protein localises to the virion membrane. Its subcellular location is the host cytoplasm. Envelope protein. Required for an early step in virion morphogenesis. In Homo sapiens (Human), this protein is Virion membrane protein OPG135 (OPG135).